A 540-amino-acid polypeptide reads, in one-letter code: Probable ATP-dependent RNA helicase DDX28 (540 aa).

A Mitochondrial targeting signal motif is present at residues 3 to 18 (LAGPSRLLALAVRLLL). Residues 126–156 (GSFVDLGLEPRVLLALQEAVPEVVQPTSVQS) carry the Q motif motif. The 193-residue stretch at 159-351 (IPPLLRGRHL…SKVTSPDSLT (193 aa)) folds into the Helicase ATP-binding domain. 172–179 (AETGSGKT) serves as a coordination point for ATP. Positions 180 to 191 (LSYLLPLFQRLL) match the Nuclear export signal motif. The DEAD motif lies at 286–289 (DEVD). A Helicase C-terminal domain is found at 377–536 (KVTELVQILK…GLASSVGDPL (160 aa)). The short motif at 520–523 (RRRR) is the Nuclear localization signal element.

Belongs to the DEAD box helicase family. As to quaternary structure, monomer. Found in a complex with GRSF1, DHX30, FASTKD2 and FASTKD5. Associates with the 16S mitochondrial rRNA (16S mt-rRNA) and with the mitochondrial ribosome large subunit (39S).

The protein resides in the nucleus. The protein localises to the mitochondrion. It is found in the mitochondrion matrix. It localises to the mitochondrion nucleoid. It carries out the reaction ATP + H2O = ADP + phosphate + H(+). Functionally, plays an essential role in facilitating the proper assembly of the mitochondrial large ribosomal subunit and its helicase activity is essential for this function. May be involved in RNA processing or transport. Has RNA and Mg(2+)-dependent ATPase activity. The polypeptide is Probable ATP-dependent RNA helicase DDX28 (Ddx28) (Mus musculus (Mouse)).